The primary structure comprises 386 residues: Succinate--CoA ligase [ADP-forming] subunit beta (386 aa).

One can recognise an ATP-grasp domain in the interval 9–244; the sequence is KEVLRKYGVA…LDEEDPKEIE (236 aa). ATP-binding positions include Lys46, 53–55, Glu99, Cys102, and Glu107; that span reads GRG. Positions 199 and 213 each coordinate Mg(2+). Substrate-binding positions include Asn264 and 321-323; that span reads GIM.

The protein belongs to the succinate/malate CoA ligase beta subunit family. Heterotetramer of two alpha and two beta subunits. Mg(2+) is required as a cofactor.

It carries out the reaction succinate + ATP + CoA = succinyl-CoA + ADP + phosphate. The catalysed reaction is GTP + succinate + CoA = succinyl-CoA + GDP + phosphate. The protein operates within carbohydrate metabolism; tricarboxylic acid cycle; succinate from succinyl-CoA (ligase route): step 1/1. Its function is as follows. Succinyl-CoA synthetase functions in the citric acid cycle (TCA), coupling the hydrolysis of succinyl-CoA to the synthesis of either ATP or GTP and thus represents the only step of substrate-level phosphorylation in the TCA. The beta subunit provides nucleotide specificity of the enzyme and binds the substrate succinate, while the binding sites for coenzyme A and phosphate are found in the alpha subunit. This is Succinate--CoA ligase [ADP-forming] subunit beta from Bacillus licheniformis (strain ATCC 14580 / DSM 13 / JCM 2505 / CCUG 7422 / NBRC 12200 / NCIMB 9375 / NCTC 10341 / NRRL NRS-1264 / Gibson 46).